The following is a 63-amino-acid chain: uncharacterized protein (63 aa).

A helical membrane pass occupies residues 38 to 58; it reads ISLFIILHLCLLVCLLLSFYF.

The protein resides in the membrane. This is an uncharacterized protein from Saccharomyces cerevisiae (strain ATCC 204508 / S288c) (Baker's yeast).